Reading from the N-terminus, the 635-residue chain is 1-deoxy-D-xylulose-5-phosphate synthase (635 aa).

Thiamine diphosphate is bound by residues His-72 and 113-115 (GHA). Asp-144 is a binding site for Mg(2+). Thiamine diphosphate is bound by residues 145–146 (GA), Asn-174, Tyr-286, and Glu-369. Residue Asn-174 coordinates Mg(2+).

This sequence belongs to the transketolase family. DXPS subfamily. As to quaternary structure, homodimer. Mg(2+) is required as a cofactor. Thiamine diphosphate serves as cofactor.

It carries out the reaction D-glyceraldehyde 3-phosphate + pyruvate + H(+) = 1-deoxy-D-xylulose 5-phosphate + CO2. The protein operates within metabolic intermediate biosynthesis; 1-deoxy-D-xylulose 5-phosphate biosynthesis; 1-deoxy-D-xylulose 5-phosphate from D-glyceraldehyde 3-phosphate and pyruvate: step 1/1. In terms of biological role, catalyzes the acyloin condensation reaction between C atoms 2 and 3 of pyruvate and glyceraldehyde 3-phosphate to yield 1-deoxy-D-xylulose-5-phosphate (DXP). This Gloeothece citriformis (strain PCC 7424) (Cyanothece sp. (strain PCC 7424)) protein is 1-deoxy-D-xylulose-5-phosphate synthase.